The chain runs to 80 residues: Metallothionein-like protein type 2 (80 aa).

Belongs to the metallothionein superfamily. Type 15 family.

In terms of biological role, metallothioneins have a high content of cysteine residues that bind various heavy metals. This chain is Metallothionein-like protein type 2, found in Brassica campestris (Field mustard).